The following is a 276-amino-acid chain: Putative phosphoenolpyruvate synthase regulatory protein (276 aa).

156 to 163 provides a ligand contact to ADP; it reads GVSRSGKT.

This sequence belongs to the pyruvate, phosphate/water dikinase regulatory protein family. PSRP subfamily.

The catalysed reaction is [pyruvate, water dikinase] + ADP = [pyruvate, water dikinase]-phosphate + AMP + H(+). It catalyses the reaction [pyruvate, water dikinase]-phosphate + phosphate + H(+) = [pyruvate, water dikinase] + diphosphate. Bifunctional serine/threonine kinase and phosphorylase involved in the regulation of the phosphoenolpyruvate synthase (PEPS) by catalyzing its phosphorylation/dephosphorylation. This Acidovorax ebreus (strain TPSY) (Diaphorobacter sp. (strain TPSY)) protein is Putative phosphoenolpyruvate synthase regulatory protein.